A 495-amino-acid chain; its full sequence is Probable biotin-dependent acyl-coenzyme A carboxylase beta3 subunit (495 aa).

A CoA carboxyltransferase N-terminal domain is found at 1–236 (MSRITTDQLR…PLPAPQTPAP (236 aa)). Residues 242 to 470 (TWDSVVASRR…SNAIAAEVHA (229 aa)) enclose the CoA carboxyltransferase C-terminal domain.

Belongs to the AccD/PCCB family. In terms of assembly, the biotin-dependent acyl-CoA carboxylase complex is composed of an AccA protein, which contains the biotin carboxylase (BC) and biotin carboxyl carrier protein (BCCP) domains, and an AccD protein, which contains the carboxyl transferase (CT) domain.

In terms of biological role, component of a biotin-dependent acyl-CoA carboxylase complex. This subunit transfers the CO2 from carboxybiotin to the CoA ester substrate. The protein is Probable biotin-dependent acyl-coenzyme A carboxylase beta3 subunit (accD3) of Mycobacterium bovis (strain ATCC BAA-935 / AF2122/97).